Reading from the N-terminus, the 365-residue chain is tRNA-specific 2-thiouridylase MnmA (365 aa).

Residues 6–13 (AMSGGVDS) and leucine 32 each bind ATP. Residue cysteine 101 is the Nucleophile of the active site. A disulfide bridge links cysteine 101 with cysteine 199. Residue glycine 125 participates in ATP binding. Residues 149-151 (KDQ) are interaction with tRNA. Catalysis depends on cysteine 199, which acts as the Cysteine persulfide intermediate.

The protein belongs to the MnmA/TRMU family.

The protein localises to the cytoplasm. The catalysed reaction is S-sulfanyl-L-cysteinyl-[protein] + uridine(34) in tRNA + AH2 + ATP = 2-thiouridine(34) in tRNA + L-cysteinyl-[protein] + A + AMP + diphosphate + H(+). In terms of biological role, catalyzes the 2-thiolation of uridine at the wobble position (U34) of tRNA, leading to the formation of s(2)U34. The chain is tRNA-specific 2-thiouridylase MnmA from Corynebacterium glutamicum (strain R).